The sequence spans 127 residues: Fluoride-specific ion channel FluC (127 aa).

4 helical membrane-spanning segments follow: residues 4 to 24 (LLLAVFIGGGTGSVARWLLSM), 35 to 55 (LGTLAANLIGAFIIGMGFAWF), 71 to 91 (TGFCGGLTTFSTFSAEVVFLL), and 103 to 123 (VFVNLLGSFAMTALAFWLFSA). Na(+) is bound by residues Gly75 and Thr78.

Belongs to the fluoride channel Fluc/FEX (TC 1.A.43) family.

The protein resides in the cell inner membrane. It catalyses the reaction fluoride(in) = fluoride(out). Its activity is regulated as follows. Na(+) is not transported, but it plays an essential structural role and its presence is essential for fluoride channel function. Its function is as follows. Fluoride-specific ion channel. Important for reducing fluoride concentration in the cell, thus reducing its toxicity. The sequence is that of Fluoride-specific ion channel FluC from Escherichia coli O81 (strain ED1a).